The sequence spans 423 residues: Gamma-glutamyl phosphate reductase (423 aa).

Belongs to the gamma-glutamyl phosphate reductase family.

Its subcellular location is the cytoplasm. It catalyses the reaction L-glutamate 5-semialdehyde + phosphate + NADP(+) = L-glutamyl 5-phosphate + NADPH + H(+). Its pathway is amino-acid biosynthesis; L-proline biosynthesis; L-glutamate 5-semialdehyde from L-glutamate: step 2/2. In terms of biological role, catalyzes the NADPH-dependent reduction of L-glutamate 5-phosphate into L-glutamate 5-semialdehyde and phosphate. The product spontaneously undergoes cyclization to form 1-pyrroline-5-carboxylate. This chain is Gamma-glutamyl phosphate reductase, found in Burkholderia pseudomallei (strain 1710b).